Consider the following 428-residue polypeptide: L-rhamnose isomerase (428 aa).

The Mn(2+) site is built by histidine 260, aspartate 292, and aspartate 294.

This sequence belongs to the rhamnose isomerase family. Mn(2+) is required as a cofactor.

It is found in the cytoplasm. It carries out the reaction L-rhamnopyranose = L-rhamnulose. It participates in carbohydrate degradation; L-rhamnose degradation; glycerone phosphate from L-rhamnose: step 1/3. In terms of biological role, catalyzes the interconversion of L-rhamnose and L-rhamnulose. The protein is L-rhamnose isomerase of Enterococcus faecalis (strain ATCC 700802 / V583).